The chain runs to 254 residues: Thiazole synthase (254 aa).

The active-site Schiff-base intermediate with DXP is K96. 1-deoxy-D-xylulose 5-phosphate contacts are provided by residues G157, 183 to 184, and 205 to 206; these read AG and NT.

This sequence belongs to the ThiG family. Homotetramer. Forms heterodimers with either ThiH or ThiS.

The protein localises to the cytoplasm. It carries out the reaction [ThiS sulfur-carrier protein]-C-terminal-Gly-aminoethanethioate + 2-iminoacetate + 1-deoxy-D-xylulose 5-phosphate = [ThiS sulfur-carrier protein]-C-terminal Gly-Gly + 2-[(2R,5Z)-2-carboxy-4-methylthiazol-5(2H)-ylidene]ethyl phosphate + 2 H2O + H(+). It functions in the pathway cofactor biosynthesis; thiamine diphosphate biosynthesis. Functionally, catalyzes the rearrangement of 1-deoxy-D-xylulose 5-phosphate (DXP) to produce the thiazole phosphate moiety of thiamine. Sulfur is provided by the thiocarboxylate moiety of the carrier protein ThiS. In vitro, sulfur can be provided by H(2)S. The polypeptide is Thiazole synthase (Clostridium kluyveri (strain ATCC 8527 / DSM 555 / NBRC 12016 / NCIMB 10680 / K1)).